The chain runs to 391 residues: tRNA-specific 2-thiouridylase MnmA (391 aa).

ATP-binding positions include 20–27 and L46; that span reads AMSGGVDS. The active-site Nucleophile is C114. C114 and C210 are joined by a disulfide. An ATP-binding site is contributed by G138. The tract at residues 160–162 is interaction with tRNA; sequence RDQ. C210 functions as the Cysteine persulfide intermediate in the catalytic mechanism.

The protein belongs to the MnmA/TRMU family.

The protein resides in the cytoplasm. It catalyses the reaction S-sulfanyl-L-cysteinyl-[protein] + uridine(34) in tRNA + AH2 + ATP = 2-thiouridine(34) in tRNA + L-cysteinyl-[protein] + A + AMP + diphosphate + H(+). In terms of biological role, catalyzes the 2-thiolation of uridine at the wobble position (U34) of tRNA, leading to the formation of s(2)U34. This chain is tRNA-specific 2-thiouridylase MnmA, found in Bartonella bacilliformis (strain ATCC 35685 / KC583 / Herrer 020/F12,63).